Reading from the N-terminus, the 506-residue chain is Beta-glucosidase 13 (506 aa).

Positions 1 to 25 are cleaved as a signal peptide; it reads MAAAGEVVMLGGILLPLLLVVAVSG. Position 49 (Gln49) interacts with a beta-D-glucoside. N-linked (GlcNAc...) asparagine glycosylation is present at Asn118. A beta-D-glucoside is bound by residues His153 and 198–199; that span reads NE. The active-site Proton donor is the Glu199. A disulfide bond links Cys219 and Cys226. Asn225 carries an N-linked (GlcNAc...) asparagine glycan. Tyr342 contacts a beta-D-glucoside. 2 N-linked (GlcNAc...) asparagine glycosylation sites follow: Asn357 and Asn367. Glu413 provides a ligand contact to a beta-D-glucoside. Residue Glu413 is the Nucleophile of the active site. Asn421 carries N-linked (GlcNAc...) asparagine glycosylation. A beta-D-glucoside contacts are provided by residues Trp462, 469–470, and Phe478; that span reads EW.

This sequence belongs to the glycosyl hydrolase 1 family.

It catalyses the reaction Hydrolysis of terminal, non-reducing beta-D-glucosyl residues with release of beta-D-glucose.. In Oryza sativa subsp. japonica (Rice), this protein is Beta-glucosidase 13 (BGLU13).